The sequence spans 344 residues: Succinylglutamate desuccinylase (344 aa).

Residues histidine 63, glutamate 66, and histidine 160 each contribute to the Zn(2+) site. Glutamate 224 is a catalytic residue.

Belongs to the AspA/AstE family. Succinylglutamate desuccinylase subfamily. The cofactor is Zn(2+).

It carries out the reaction N-succinyl-L-glutamate + H2O = L-glutamate + succinate. It participates in amino-acid degradation; L-arginine degradation via AST pathway; L-glutamate and succinate from L-arginine: step 5/5. Functionally, transforms N(2)-succinylglutamate into succinate and glutamate. In Shewanella sp. (strain MR-4), this protein is Succinylglutamate desuccinylase.